Reading from the N-terminus, the 158-residue chain is NADH-quinone oxidoreductase subunit B (158 aa).

4 residues coordinate [4Fe-4S] cluster: C37, C38, C102, and C132.

Belongs to the complex I 20 kDa subunit family. In terms of assembly, NDH-1 is composed of 14 different subunits. Subunits NuoB, C, D, E, F, and G constitute the peripheral sector of the complex. Requires [4Fe-4S] cluster as cofactor.

Its subcellular location is the cell inner membrane. It carries out the reaction a quinone + NADH + 5 H(+)(in) = a quinol + NAD(+) + 4 H(+)(out). In terms of biological role, NDH-1 shuttles electrons from NADH, via FMN and iron-sulfur (Fe-S) centers, to quinones in the respiratory chain. The immediate electron acceptor for the enzyme in this species is believed to be ubiquinone. Couples the redox reaction to proton translocation (for every two electrons transferred, four hydrogen ions are translocated across the cytoplasmic membrane), and thus conserves the redox energy in a proton gradient. In Thiobacillus denitrificans (strain ATCC 25259 / T1), this protein is NADH-quinone oxidoreductase subunit B.